The following is a 422-amino-acid chain: Lipoyl synthase, mitochondrial (422 aa).

The N-terminal 34 residues, 1–34 (MAASSTRLRCLYASSAPAWKKSPSQSIISLSRHY), are a transit peptide targeting the mitochondrion. The span at 37–48 (TSSTTPSLNPDE) shows a compositional bias: polar residues. The disordered stretch occupies residues 37-70 (TSSTTPSLNPDESSSSSSSTIPKRRKTTTFRDKL). Positions 146, 151, 157, 177, 181, 184, and 383 each coordinate [4Fe-4S] cluster. In terms of domain architecture, Radical SAM core spans 160 to 372 (GSDKSAATAT…RQRALEMGFL (213 aa)).

The protein belongs to the radical SAM superfamily. Lipoyl synthase family. The cofactor is [4Fe-4S] cluster.

It is found in the mitochondrion. The enzyme catalyses [[Fe-S] cluster scaffold protein carrying a second [4Fe-4S](2+) cluster] + N(6)-octanoyl-L-lysyl-[protein] + 2 oxidized [2Fe-2S]-[ferredoxin] + 2 S-adenosyl-L-methionine + 4 H(+) = [[Fe-S] cluster scaffold protein] + N(6)-[(R)-dihydrolipoyl]-L-lysyl-[protein] + 4 Fe(3+) + 2 hydrogen sulfide + 2 5'-deoxyadenosine + 2 L-methionine + 2 reduced [2Fe-2S]-[ferredoxin]. Its pathway is protein modification; protein lipoylation via endogenous pathway; protein N(6)-(lipoyl)lysine from octanoyl-[acyl-carrier-protein]: step 2/2. Its function is as follows. Catalyzes the radical-mediated insertion of two sulfur atoms into the C-6 and C-8 positions of the octanoyl moiety bound to the lipoyl domains of lipoate-dependent enzymes, thereby converting the octanoylated domains into lipoylated derivatives. The chain is Lipoyl synthase, mitochondrial from Talaromyces stipitatus (strain ATCC 10500 / CBS 375.48 / QM 6759 / NRRL 1006) (Penicillium stipitatum).